Here is a 434-residue protein sequence, read N- to C-terminus: Enolase (434 aa).

Gln-166 contacts (2R)-2-phosphoglycerate. Catalysis depends on Glu-208, which acts as the Proton donor. Mg(2+)-binding residues include Asp-245, Glu-290, and Asp-317. 4 residues coordinate (2R)-2-phosphoglycerate: Lys-342, Arg-371, Ser-372, and Lys-393. Catalysis depends on Lys-342, which acts as the Proton acceptor.

Belongs to the enolase family. The cofactor is Mg(2+).

It localises to the cytoplasm. It is found in the secreted. The protein localises to the cell surface. The enzyme catalyses (2R)-2-phosphoglycerate = phosphoenolpyruvate + H2O. It functions in the pathway carbohydrate degradation; glycolysis; pyruvate from D-glyceraldehyde 3-phosphate: step 4/5. Functionally, catalyzes the reversible conversion of 2-phosphoglycerate (2-PG) into phosphoenolpyruvate (PEP). It is essential for the degradation of carbohydrates via glycolysis. In Caldicellulosiruptor bescii (strain ATCC BAA-1888 / DSM 6725 / KCTC 15123 / Z-1320) (Anaerocellum thermophilum), this protein is Enolase.